We begin with the raw amino-acid sequence, 142 residues long: gSG7 salivary protein (142 aa).

Residues 1–26 (MAARMTIMLPLAVALICLLQTEPGMA) form the signal peptide. Disulfide bonds link cysteine 84/cysteine 139 and cysteine 107/cysteine 117.

Its subcellular location is the secreted. In terms of biological role, salivary protein that moderately inhibits the alternative pathway for complement system activation in the host. This chain is gSG7 salivary protein, found in Anopheles darlingi (Mosquito).